The sequence spans 430 residues: Phosphoglucosamine mutase (430 aa).

Residue S93 is the Phosphoserine intermediate of the active site. Positions 93, 227, 229, and 231 each coordinate Mg(2+). Residue S93 is modified to Phosphoserine.

Belongs to the phosphohexose mutase family. Requires Mg(2+) as cofactor. In terms of processing, activated by phosphorylation.

It carries out the reaction alpha-D-glucosamine 1-phosphate = D-glucosamine 6-phosphate. Catalyzes the conversion of glucosamine-6-phosphate to glucosamine-1-phosphate. This Thermosipho africanus (strain TCF52B) protein is Phosphoglucosamine mutase.